A 348-amino-acid chain; its full sequence is 3-isopropylmalate dehydrogenase (348 aa).

76-87 (GPKWTDPNNRPE) contacts NAD(+). Substrate contacts are provided by R94, R104, R132, and D217. D217, D241, and D245 together coordinate Mg(2+). Position 275 to 287 (275 to 287 (GSAPDIAGKNVAN)) interacts with NAD(+).

This sequence belongs to the isocitrate and isopropylmalate dehydrogenases family. LeuB type 1 subfamily. In terms of assembly, homodimer. Mg(2+) serves as cofactor. It depends on Mn(2+) as a cofactor.

It is found in the cytoplasm. The enzyme catalyses (2R,3S)-3-isopropylmalate + NAD(+) = 4-methyl-2-oxopentanoate + CO2 + NADH. It participates in amino-acid biosynthesis; L-leucine biosynthesis; L-leucine from 3-methyl-2-oxobutanoate: step 3/4. Its function is as follows. Catalyzes the oxidation of 3-carboxy-2-hydroxy-4-methylpentanoate (3-isopropylmalate) to 3-carboxy-4-methyl-2-oxopentanoate. The product decarboxylates to 4-methyl-2 oxopentanoate. The sequence is that of 3-isopropylmalate dehydrogenase from Staphylococcus aureus (strain bovine RF122 / ET3-1).